Here is a 72-residue protein sequence, read N- to C-terminus: Translation initiation factor IF-1 (72 aa).

In terms of domain architecture, S1-like spans 1–72; that stretch reads MAKDDVIEVE…TRGRITYRYK (72 aa). Residue Tyr60 is modified to Phosphotyrosine.

This sequence belongs to the IF-1 family. In terms of assembly, component of the 30S ribosomal translation pre-initiation complex which assembles on the 30S ribosome in the order IF-2 and IF-3, IF-1 and N-formylmethionyl-tRNA(fMet); mRNA recruitment can occur at any time during PIC assembly.

The protein localises to the cytoplasm. Functionally, one of the essential components for the initiation of protein synthesis. Stabilizes the binding of IF-2 and IF-3 on the 30S subunit to which N-formylmethionyl-tRNA(fMet) subsequently binds. Helps modulate mRNA selection, yielding the 30S pre-initiation complex (PIC). Upon addition of the 50S ribosomal subunit IF-1, IF-2 and IF-3 are released leaving the mature 70S translation initiation complex. This is Translation initiation factor IF-1 from Geobacillus thermodenitrificans (strain NG80-2).